The chain runs to 479 residues: Trigger factor (479 aa).

The region spanning 174-261 is the PPIase FKBP-type domain; the sequence is GDIAVVSFSG…LKELKTRELP (88 aa). Residues 438–479 form a disordered region; the sequence is VLESEAKTSKPAAKSKGSKTKSTKTKTNKANTEKPASDKSKS. Positions 453–464 are enriched in basic residues; sequence KGSKTKSTKTKT. Residues 468–479 are compositionally biased toward basic and acidic residues; sequence NTEKPASDKSKS.

Belongs to the FKBP-type PPIase family. Tig subfamily.

Its subcellular location is the cytoplasm. It carries out the reaction [protein]-peptidylproline (omega=180) = [protein]-peptidylproline (omega=0). In terms of biological role, involved in protein export. Acts as a chaperone by maintaining the newly synthesized protein in an open conformation. Functions as a peptidyl-prolyl cis-trans isomerase. In Prochlorococcus marinus (strain MIT 9313), this protein is Trigger factor.